Consider the following 245-residue polypeptide: 5-oxoprolinase subunit A (245 aa).

Belongs to the LamB/PxpA family. In terms of assembly, forms a complex composed of PxpA, PxpB and PxpC.

It carries out the reaction 5-oxo-L-proline + ATP + 2 H2O = L-glutamate + ADP + phosphate + H(+). Its function is as follows. Catalyzes the cleavage of 5-oxoproline to form L-glutamate coupled to the hydrolysis of ATP to ADP and inorganic phosphate. The sequence is that of 5-oxoprolinase subunit A from Haemophilus influenzae (strain PittGG).